The primary structure comprises 348 residues: D-alanine--D-alanine ligase (348 aa).

The ATP-grasp domain occupies 132 to 334; it reads KRVLESIGIP…YPDLIEELVT (203 aa). 162 to 217 lines the ATP pocket; it reads LARLTFPIFVKPANMGSSVGISKAQTKVELRKAIQLALTYDSRVLIEQGVIAREIE. Residues Asp-288, Glu-301, and Asn-303 each coordinate Mg(2+).

It belongs to the D-alanine--D-alanine ligase family. It depends on Mg(2+) as a cofactor. Mn(2+) is required as a cofactor.

It is found in the cytoplasm. The catalysed reaction is 2 D-alanine + ATP = D-alanyl-D-alanine + ADP + phosphate + H(+). It participates in cell wall biogenesis; peptidoglycan biosynthesis. In terms of biological role, cell wall formation. This chain is D-alanine--D-alanine ligase, found in Streptococcus pyogenes serotype M4 (strain MGAS10750).